The following is a 142-amino-acid chain: Spliceosomal protein DIB1 (142 aa).

The protein belongs to the DIM1 family. Component of the 25S [U4/U6.U5] tri-snRNP.

The protein resides in the nucleus. Functionally, essential role in pre-mRNA splicing. Also essential for entry into mitosis (G2/M progression) as well as for chromosome segregation during mitosis. The polypeptide is Spliceosomal protein DIB1 (DIB1) (Candida glabrata (strain ATCC 2001 / BCRC 20586 / JCM 3761 / NBRC 0622 / NRRL Y-65 / CBS 138) (Yeast)).